Here is a 485-residue protein sequence, read N- to C-terminus: Dual specificity protein phosphatase CDC14B (485 aa).

The interval 1–38 (MKRKSERRSAWATAPPCSRRSSSSSPGVKKSRSSTPQE) is disordered. Positions 1–54 (MKRKSERRSAWATAPPCSRRSSSSSPGVKKSRSSTPQELHRLEQQDDLYLDITD) match the Nucleolar localization signal motif. Over residues 15–28 (PPCSRRSSSSSPGV) the composition is skewed to low complexity. The tract at residues 44–198 (QQDDLYLDIT…AMQYGFFNFN (155 aa)) is a. Positions 199–212 (SFNLDEYEHYEKAE) are linker. Residues 213–379 (NGDFNWIIPE…EGDYFRQKLR (167 aa)) are b. Residues 215 to 374 (DFNWIIPERF…SSLWLEGDYF (160 aa)) form the Tyrosine-protein phosphatase domain. The active-site Phosphocysteine intermediate is the C314. Positions 402–424 (LNGLENQDNQEPEPYSDDDEVSG) are disordered. The span at 409 to 422 (DNQEPEPYSDDDEV) shows a compositional bias: acidic residues.

It belongs to the protein-tyrosine phosphatase family. Non-receptor class CDC14 subfamily. In terms of assembly, interacts with FZR1/CDH1.

Its subcellular location is the nucleus. It localises to the nucleolus. The protein localises to the nucleoplasm. It carries out the reaction O-phospho-L-tyrosyl-[protein] + H2O = L-tyrosyl-[protein] + phosphate. The enzyme catalyses O-phospho-L-seryl-[protein] + H2O = L-seryl-[protein] + phosphate. The catalysed reaction is O-phospho-L-threonyl-[protein] + H2O = L-threonyl-[protein] + phosphate. Its function is as follows. Dual-specificity phosphatase involved in DNA damage response. Essential regulator of the G2 DNA damage checkpoint: following DNA damage, translocates to the nucleus and dephosphorylates FZR1/CDH1, a key activator of the anaphase promoting complex/cyclosome (APC/C). Dephosphorylates SIRT2 around early anaphase. Dephosphorylation of FZR1/CDH1 activates the APC/C, leading to the ubiquitination of PLK1, preventing entry into mitosis. Preferentially dephosphorylates proteins modified by proline-directed kinases. The chain is Dual specificity protein phosphatase CDC14B (Cdc14b) from Mus musculus (Mouse).